A 204-amino-acid polypeptide reads, in one-letter code: Urease accessory protein UreG (204 aa).

12 to 19 is a GTP binding site; the sequence is GPVGSGKT.

This sequence belongs to the SIMIBI class G3E GTPase family. UreG subfamily. As to quaternary structure, homodimer. UreD, UreF and UreG form a complex that acts as a GTP-hydrolysis-dependent molecular chaperone, activating the urease apoprotein by helping to assemble the nickel containing metallocenter of UreC. The UreE protein probably delivers the nickel.

The protein localises to the cytoplasm. Functionally, facilitates the functional incorporation of the urease nickel metallocenter. This process requires GTP hydrolysis, probably effectuated by UreG. In Pseudomonas fluorescens (strain ATCC BAA-477 / NRRL B-23932 / Pf-5), this protein is Urease accessory protein UreG.